Consider the following 292-residue polypeptide: 4-hydroxy-tetrahydrodipicolinate synthase (292 aa).

Thr45 serves as a coordination point for pyruvate. The active-site Proton donor/acceptor is the Tyr133. Lys161 serves as the catalytic Schiff-base intermediate with substrate. Residue Ile203 coordinates pyruvate.

The protein belongs to the DapA family. In terms of assembly, homodimer.

It is found in the cytoplasm. The catalysed reaction is L-aspartate 4-semialdehyde + pyruvate = (2S,4S)-4-hydroxy-2,3,4,5-tetrahydrodipicolinate + H2O + H(+). It functions in the pathway amino-acid biosynthesis; L-lysine biosynthesis via DAP pathway; (S)-tetrahydrodipicolinate from L-aspartate: step 3/4. In terms of biological role, catalyzes the condensation of (S)-aspartate-beta-semialdehyde [(S)-ASA] and pyruvate to 4-hydroxy-tetrahydrodipicolinate (HTPA). The sequence is that of 4-hydroxy-tetrahydrodipicolinate synthase from Pseudomonas aeruginosa (strain ATCC 15692 / DSM 22644 / CIP 104116 / JCM 14847 / LMG 12228 / 1C / PRS 101 / PAO1).